The chain runs to 946 residues: Protein translocase subunit SecA (946 aa).

ATP-binding positions include Gln87, 105–109, and Asp524; that span reads GEGKT. The disordered stretch occupies residues 905–926; sequence APASDAAQRDPKNPASWGKIGR. 4 residues coordinate Zn(2+): Cys930, Cys932, Cys941, and His942.

Belongs to the SecA family. In terms of assembly, monomer and homodimer. Part of the essential Sec protein translocation apparatus which comprises SecA, SecYEG and auxiliary proteins SecDF-YajC and YidC. The cofactor is Zn(2+).

It is found in the cell inner membrane. The protein localises to the cytoplasm. The catalysed reaction is ATP + H2O + cellular proteinSide 1 = ADP + phosphate + cellular proteinSide 2.. Functionally, part of the Sec protein translocase complex. Interacts with the SecYEG preprotein conducting channel. Has a central role in coupling the hydrolysis of ATP to the transfer of proteins into and across the cell membrane, serving both as a receptor for the preprotein-SecB complex and as an ATP-driven molecular motor driving the stepwise translocation of polypeptide chains across the membrane. The protein is Protein translocase subunit SecA of Bradyrhizobium diazoefficiens (strain JCM 10833 / BCRC 13528 / IAM 13628 / NBRC 14792 / USDA 110).